Consider the following 143-residue polypeptide: Nucleoside diphosphate kinase (143 aa).

Residues Lys11, Phe59, Arg87, Thr93, Arg104, and Asn114 each contribute to the ATP site. His117 serves as the catalytic Pros-phosphohistidine intermediate.

Belongs to the NDK family. In terms of assembly, homotetramer. Mg(2+) is required as a cofactor.

Its subcellular location is the cytoplasm. It carries out the reaction a 2'-deoxyribonucleoside 5'-diphosphate + ATP = a 2'-deoxyribonucleoside 5'-triphosphate + ADP. The enzyme catalyses a ribonucleoside 5'-diphosphate + ATP = a ribonucleoside 5'-triphosphate + ADP. Functionally, major role in the synthesis of nucleoside triphosphates other than ATP. The ATP gamma phosphate is transferred to the NDP beta phosphate via a ping-pong mechanism, using a phosphorylated active-site intermediate. In Shewanella sp. (strain W3-18-1), this protein is Nucleoside diphosphate kinase.